Here is a 134-residue protein sequence, read N- to C-terminus: uncharacterized protein (134 aa).

One can recognise an HIT domain in the interval isoleucine 4–phenylalanine 107. Positions histidine 91–histidine 95 match the Histidine triad motif motif.

This is an uncharacterized protein from Mycobacterium leprae (strain TN).